The following is a 511-amino-acid chain: Glutamyl-tRNA(Gln) amidotransferase subunit B, mitochondrial (511 aa).

A mitochondrion-targeting transit peptide spans 1-6 (MLRRYL).

Belongs to the GatB/GatE family. GatB subfamily. In terms of assembly, subunit of the heterotrimeric GatFAB amidotransferase (AdT) complex, composed of A, B and F subunits.

The protein resides in the mitochondrion. The enzyme catalyses L-glutamyl-tRNA(Gln) + L-glutamine + ATP + H2O = L-glutaminyl-tRNA(Gln) + L-glutamate + ADP + phosphate + H(+). In terms of biological role, allows the formation of correctly charged Gln-tRNA(Gln) through the transamidation of misacylated Glu-tRNA(Gln) in the mitochondria. The reaction takes place in the presence of glutamine and ATP through an activated gamma-phospho-Glu-tRNA(Gln). This Lodderomyces elongisporus (strain ATCC 11503 / CBS 2605 / JCM 1781 / NBRC 1676 / NRRL YB-4239) (Yeast) protein is Glutamyl-tRNA(Gln) amidotransferase subunit B, mitochondrial.